We begin with the raw amino-acid sequence, 204 residues long: Thiamine-phosphate synthase (204 aa).

4-amino-2-methyl-5-(diphosphooxymethyl)pyrimidine contacts are provided by residues glutamine 35–lysine 39 and asparagine 67. Mg(2+) contacts are provided by aspartate 68 and aspartate 87. A 4-amino-2-methyl-5-(diphosphooxymethyl)pyrimidine-binding site is contributed by serine 106. Threonine 132–threonine 134 is a 2-[(2R,5Z)-2-carboxy-4-methylthiazol-5(2H)-ylidene]ethyl phosphate binding site. Lysine 135 is a 4-amino-2-methyl-5-(diphosphooxymethyl)pyrimidine binding site. 2-[(2R,5Z)-2-carboxy-4-methylthiazol-5(2H)-ylidene]ethyl phosphate is bound by residues glycine 163 and valine 183–serine 184.

It belongs to the thiamine-phosphate synthase family. It depends on Mg(2+) as a cofactor.

The enzyme catalyses 2-[(2R,5Z)-2-carboxy-4-methylthiazol-5(2H)-ylidene]ethyl phosphate + 4-amino-2-methyl-5-(diphosphooxymethyl)pyrimidine + 2 H(+) = thiamine phosphate + CO2 + diphosphate. The catalysed reaction is 2-(2-carboxy-4-methylthiazol-5-yl)ethyl phosphate + 4-amino-2-methyl-5-(diphosphooxymethyl)pyrimidine + 2 H(+) = thiamine phosphate + CO2 + diphosphate. It catalyses the reaction 4-methyl-5-(2-phosphooxyethyl)-thiazole + 4-amino-2-methyl-5-(diphosphooxymethyl)pyrimidine + H(+) = thiamine phosphate + diphosphate. The protein operates within cofactor biosynthesis; thiamine diphosphate biosynthesis; thiamine phosphate from 4-amino-2-methyl-5-diphosphomethylpyrimidine and 4-methyl-5-(2-phosphoethyl)-thiazole: step 1/1. In terms of biological role, condenses 4-methyl-5-(beta-hydroxyethyl)thiazole monophosphate (THZ-P) and 2-methyl-4-amino-5-hydroxymethyl pyrimidine pyrophosphate (HMP-PP) to form thiamine monophosphate (TMP). The chain is Thiamine-phosphate synthase from Vibrio campbellii (strain ATCC BAA-1116).